The primary structure comprises 505 residues: RNA-binding region-containing protein 3 (505 aa).

An RRM 1 domain is found at 15–90; the sequence is KTLIIRHLPR…RTLVVEFAKD (76 aa). 4 disordered regions span residues 96 to 123, 193 to 236, 354 to 374, and 486 to 505; these read ILKD…QPSV, PPMF…EEER, AQVP…SEFI, and ARSA…GRKH. Residues 193-214 show a composition bias toward pro residues; sequence PPMFEMPSGPLPPPFPPENPPL. Composition is skewed to acidic residues over residues 221-235 and 361-370; these read GSEE…DEEE and EEQEEDEDIP. Residues 405–488 enclose the RRM 2 domain; it reads CRLYVKNVAK…KPLVVQFARS (84 aa). Residues 491-505 show a composition bias toward basic and acidic residues; sequence PKQESADPKKGGRKH.

As to quaternary structure, component of the U11/U12 snRNPs that are part of the U12-type spliceosome.

The protein localises to the nucleus. In terms of biological role, participates in pre-mRNA U12-dependent splicing, performed by the minor spliceosome which removes U12-type introns. U12-type introns comprise less than 1% of all non-coding sequences. This Danio rerio (Zebrafish) protein is RNA-binding region-containing protein 3.